The chain runs to 179 residues: Large ribosomal subunit protein uL5 (179 aa).

This sequence belongs to the universal ribosomal protein uL5 family. In terms of assembly, part of the 50S ribosomal subunit; part of the 5S rRNA/L5/L18/L25 subcomplex. Contacts the 5S rRNA and the P site tRNA. Forms a bridge to the 30S subunit in the 70S ribosome.

Functionally, this is one of the proteins that bind and probably mediate the attachment of the 5S RNA into the large ribosomal subunit, where it forms part of the central protuberance. In the 70S ribosome it contacts protein S13 of the 30S subunit (bridge B1b), connecting the 2 subunits; this bridge is implicated in subunit movement. Contacts the P site tRNA; the 5S rRNA and some of its associated proteins might help stabilize positioning of ribosome-bound tRNAs. The sequence is that of Large ribosomal subunit protein uL5 from Bordetella bronchiseptica (strain ATCC BAA-588 / NCTC 13252 / RB50) (Alcaligenes bronchisepticus).